Here is a 343-residue protein sequence, read N- to C-terminus: Uroporphyrinogen decarboxylase (343 aa).

Substrate contacts are provided by residues 23-27, Asp-73, Tyr-150, Ser-205, and His-322; that span reads RQAGR.

The protein belongs to the uroporphyrinogen decarboxylase family. In terms of assembly, homodimer.

The protein resides in the cytoplasm. The catalysed reaction is uroporphyrinogen III + 4 H(+) = coproporphyrinogen III + 4 CO2. It participates in porphyrin-containing compound metabolism; protoporphyrin-IX biosynthesis; coproporphyrinogen-III from 5-aminolevulinate: step 4/4. Functionally, catalyzes the decarboxylation of four acetate groups of uroporphyrinogen-III to yield coproporphyrinogen-III. The sequence is that of Uroporphyrinogen decarboxylase from Cereibacter sphaeroides (strain KD131 / KCTC 12085) (Rhodobacter sphaeroides).